We begin with the raw amino-acid sequence, 513 residues long: Aspartic proteinase A2 (513 aa).

Residues methionine 1–serine 24 form the signal peptide. Positions lysine 25–glycine 71 are cleaved as a propeptide — activation peptide. The 422-residue stretch at tyrosine 89–alanine 510 folds into the Peptidase A1 domain. Aspartate 107 is a catalytic residue. 2 cysteine pairs are disulfide-bonded: cysteine 120–cysteine 126 and cysteine 285–cysteine 289. Aspartate 294 is a catalytic residue. One can recognise a Saposin B-type domain in the interval valine 319–proline 424. Disulfide bonds link cysteine 324/cysteine 418, cysteine 349/cysteine 390, cysteine 355/cysteine 387, and cysteine 432/cysteine 469. Residue asparagine 404 is glycosylated (N-linked (GlcNAc...) asparagine).

Belongs to the peptidase A1 family. In terms of tissue distribution, expressed in seed pods and dry seeds.

It localises to the vacuole. Its function is as follows. Involved in the breakdown of propeptides of storage proteins in protein-storage vacuoles. The polypeptide is Aspartic proteinase A2 (APA2) (Arabidopsis thaliana (Mouse-ear cress)).